A 432-amino-acid chain; its full sequence is ATP-dependent RNA helicase RhlB (432 aa).

A Q motif motif is present at residues 9–37 (KKFSDFALHPKVIEALEKKGFSNCTQIQA). The Helicase ATP-binding domain occupies 40 to 219 (LPITVKGHDI…FEQMNNPEYV (180 aa)). 53-60 (AQTGTGKT) serves as a coordination point for ATP. The DEAD box signature appears at 165–168 (DEAD). Residues 245 to 390 (RLLQTLIEEE…VSKYNSDALL (146 aa)) enclose the Helicase C-terminal domain. A disordered region spans residues 393–432 (LPEPKRRHRPRQGQPRRNNSAPRRGNNTQRNNRNKRPSHS). Over residues 404–423 (QGQPRRNNSAPRRGNNTQRN) the composition is skewed to low complexity.

The protein belongs to the DEAD box helicase family. RhlB subfamily. Component of the RNA degradosome, which is a multiprotein complex involved in RNA processing and mRNA degradation.

It localises to the cytoplasm. It carries out the reaction ATP + H2O = ADP + phosphate + H(+). Functionally, DEAD-box RNA helicase involved in RNA degradation. Has RNA-dependent ATPase activity and unwinds double-stranded RNA. The protein is ATP-dependent RNA helicase RhlB of Proteus mirabilis (strain HI4320).